We begin with the raw amino-acid sequence, 382 residues long: ATP phosphoribosyltransferase regulatory subunit (382 aa).

It belongs to the class-II aminoacyl-tRNA synthetase family. HisZ subfamily. Heteromultimer composed of HisG and HisZ subunits.

It localises to the cytoplasm. The protein operates within amino-acid biosynthesis; L-histidine biosynthesis; L-histidine from 5-phospho-alpha-D-ribose 1-diphosphate: step 1/9. In terms of biological role, required for the first step of histidine biosynthesis. May allow the feedback regulation of ATP phosphoribosyltransferase activity by histidine. The polypeptide is ATP phosphoribosyltransferase regulatory subunit (Burkholderia cenocepacia (strain HI2424)).